Here is a 64-residue protein sequence, read N- to C-terminus: uncharacterized protein (64 aa).

A helical transmembrane segment spans residues 30–52 (FYAIFEMLFWPLVSLISVGLLGE).

It is found in the membrane. This is an uncharacterized protein from Archaeoglobus fulgidus (strain ATCC 49558 / DSM 4304 / JCM 9628 / NBRC 100126 / VC-16).